The following is a 166-amino-acid chain: Large ribosomal subunit protein uL10 (166 aa).

Belongs to the universal ribosomal protein uL10 family. As to quaternary structure, part of the ribosomal stalk of the 50S ribosomal subunit. The N-terminus interacts with L11 and the large rRNA to form the base of the stalk. The C-terminus forms an elongated spine to which L12 dimers bind in a sequential fashion forming a multimeric L10(L12)X complex.

Its function is as follows. Forms part of the ribosomal stalk, playing a central role in the interaction of the ribosome with GTP-bound translation factors. This is Large ribosomal subunit protein uL10 from Bacillus cereus (strain G9842).